Here is a 511-residue protein sequence, read N- to C-terminus: MNFKQNIVYKKMAISMKITAIRPIALVISFTLLSCKDKVKTVEQQDEPTKPNIVYILTDQWRGAALGYAGDPNVKTPHLDALAKEAVNFTNAVSVTPVCTPHRASLLTGKYPITTGMFLNDLYLPSEELCMAEIFKAEGYNTAYWGKWHLDGHRRSAYTPKERRQGFDYWKALECSHDYNKMPYYDNDNPEVKYWGKYSPFAIVEDANTYLEKQAKDDTPFLAVVSIATPHFPHGSAPQKYKDMYSPESLILNPNVSPKFEARSREELQGYYAHATATDEAIGLLLKQMDALGLNENTIVVFSSDHGEMMGANDVRPFQKQVAWDESIRVPFLIKYPGIDKQKGVTVNAPINTPDILPSLLGLSNIKIPDGIEGEDLSELIKNPDPEADREALVMNVAPFAGGYPNLPYRAIRTKQYTYARTTEGPSMFFDNVADPYQQNNLLGKPEFETLQNELDAKLNKKLAELGDEFKSRDYYLKKYNYVFGKNKPAIPYWEFNNGKGEVQSPIPVTQ.

Positions Met-1 to Ser-34 are cleaved as a signal peptide. The N-palmitoyl cysteine moiety is linked to residue Cys-35. Cys-35 is lipidated: S-diacylglycerol cysteine. Ca(2+)-binding residues include Asp-59 and Cys-99. Catalysis depends on Cys-99, which acts as the Nucleophile. Cys-99 is subject to 3-oxoalanine (Cys). Residue His-149 is part of the active site. Asp-305 provides a ligand contact to Ca(2+).

This sequence belongs to the sulfatase family. Ca(2+) is required as a cofactor. The conversion to 3-oxoalanine (also known as C-formylglycine, FGly), of a serine or cysteine residue in prokaryotes and of a cysteine residue in eukaryotes, is critical for catalytic activity. This post-translational modification is severely defective in multiple sulfatase deficiency (MSD).

It is found in the cell membrane. Functionally, sulfatase involved in ulvan degradation. Ulvan is the main polysaccharide component of the Ulvales (green seaweed) cell wall. It is composed of disaccharide building blocks comprising 3-sulfated rhamnose (Rha3S) linked to D-glucuronic acid (GlcA), L-iduronic acid (IduA), or D-xylose (Xyl). The polypeptide is Ulvan-active sulfatase (Formosa agariphila (strain DSM 15362 / KCTC 12365 / LMG 23005 / KMM 3901 / M-2Alg 35-1)).